The following is a 156-amino-acid chain: Maintenance of carboxysome distribution protein B (156 aa).

The segment at 1-55 (MSNNALDRLINKQKPKVPPRNDVVSESVSNDIKTQGQQELNTSLPPSDTKATPEE) is required for interaction with McdA:DNA complex. Residues 1–79 (MSNNALDRLI…QKPKLSPDTF (79 aa)) are disordered. A compositionally biased stretch (polar residues) spans 24–50 (VSESVSNDIKTQGQQELNTSLPPSDTK). Residues 51–63 (ATPEEMPTSHESE) show a composition bias toward basic and acidic residues. Residues 122 to 156 (PEELAQVIQLAQERLSQRKAIADYKRAKTMQERFL) are a coiled coil.

As to quaternary structure, homodimerizes; may exist in higher order oligomers in solution. Forms a complex with McdA:DNA. Homohexamerizes, interacts with shell components of the carboxysome.

It is found in the carboxysome. McdA and McdB together mediate carboxysome (Cb) spacing, size, ultrastructure and probably inheritance in the cell, together they prevent Cb aggregation. McdA is an ATPase that forms dynamic gradients on the nucleoid in response to adapter protein McdB, which associates with carboxysomes. The interplay between McdA gradients on the nucleoid and McdB-bound carboxysomes result in the equal spacing of Cbs along the cell length. Stimulates the ATPase activity of McdA, causing McdA to be released from DNA. Undergoes liquid-liquid phase separation. In terms of biological role, incorrect positioning (aggregation) of carboxysomes results in reduced CO(2) fixation by encapsulated ribulose-1,5-bisphosphate carboxylase (RuBisCO, cbbL/cbbS), which leads to slower growth. The sequence is that of Maintenance of carboxysome distribution protein B from Gloeothece citriformis (strain PCC 7424) (Cyanothece sp. (strain PCC 7424)).